A 1380-amino-acid chain; its full sequence is Mitogen-activated protein kinase kinase kinase 5 (1380 aa).

The interval 30 to 97 (CRRGGGAATA…GNSGSGGGRR (68 aa)) is disordered. The span at 37-49 (ATAAEGEPSLQPL) shows a compositional bias: low complexity. Residues 50-59 (LVPPPPPPPG) are compositionally biased toward pro residues. Asymmetric dimethylarginine occurs at positions 85 and 87. S90 bears the Phosphoserine; by PIM1 and PKB/AKT1 mark. Residues 649–1374 (HCKRFFEMVN…MLCTLWKAII (726 aa)) are interaction with PPIA/CYPA. Positions 687-945 (NGDRVVLGKG…ANDLLIDEFL (259 aa)) constitute a Protein kinase domain. ATP-binding positions include 693-701 (LGKGTYGIV) and K716. A Phosphotyrosine modification is found at Y725. Residue D810 is the Proton acceptor of the active site. T820 is modified (phosphothreonine; by autocatalysis). T845 bears the Phosphothreonine; by autocatalysis, MELK and MAP3K6 mark. At T849 the chain carries Phosphothreonine; by autocatalysis. A Phosphoserine modification is found at S965. Position 973 is a phosphoserine; by autocatalysis (S973). Phosphoserine is present on residues S1036 and S1040. Residues 1188-1215 (ASESDTADPEDLDVEDEHEELSSNQTVR) form a disordered region. Positions 1192–1206 (DTADPEDLDVEDEHE) are enriched in acidic residues. The stretch at 1252 to 1292 (LGRMKIETNRLLEELVRKERELQALLHQAIEEKDQEIRHLK) forms a coiled coil.

Belongs to the protein kinase superfamily. STE Ser/Thr protein kinase family. MAP kinase kinase kinase subfamily. As to quaternary structure, homodimer when inactive. Binds both upstream activators and downstream substrates in multimolecular complexes. Part of a cytoplasmic complex made of HIPK1, DAB2IP and MAP3K5 in response to TNF. This complex formation promotes MAP3K5-JNK activation and subsequent apoptosis. Interacts with SOCS1 which recognizes phosphorylation of Tyr-725 and induces MAP3K5/ASK1 degradation in endothelial cells. Interacts with the 14-3-3 family proteins such as YWHAB, YWHAE, YWHAQ, YWHAH, YWHAZ and SFN. Interacts with ARRB2, BIRC2, DAB2IP, IGF1R, MAP3K6/ASK2, PIM1, PGAM5, SOCS1, STUB1, TRAF2 and TXN. Interacts with ERN1 in a TRAF2-dependent manner. Interacts with calcineurin subunit PPP3R1, PPP5C, PPM1L and TRAF6. Interacts (via N-terminus) with RAF1 and this interaction inhibits the proapoptotic function of MAP3K5. Interacts with DAB2IP (via N-terminus C2 domain); the interaction occurs in a TNF-alpha-dependent manner. Interacts with DUSP13A; may positively regulate apoptosis. Interacts with PPIA/CYPA. Interacts with PRMT1; the interaction results in MAP3K5 methylation by PRMT1 which inhibits MAP3K5 activation. Interacts with TRAF2; the interaction is inhibited by PRMT1. Interacts with TRIM48. The cofactor is Mg(2+). Post-translationally, ser-90 and Ser-1040 are inactivating phosphorylation sites, the former of which is phosphorylated by AKT1. Phosphorylated at Ser-973 which induces association of MAP3K5/ASK1 with the 14-3-3 family proteins and suppresses MAP3K5/ASK1 activity. Calcineurin (CN) dephosphorylates this site. Also dephosphorylated and activated by PGAM5. Phosphorylated at Thr-845 through autophosphorylation and by MAP3K6/ASK2 which leads to activation. Thr-845 is dephosphorylated by PPP5C. Phosphorylation at Ser-973 in response to oxidative stress is negatively regulated by PPIA/CYPA. Ubiquitinated. Tumor necrosis factor (TNF) induces TNFR2-dependent ubiquitination, leading to proteasomal degradation. Ubiquitinated by RC3H2 in a TRIM48-dependent manner. In terms of processing, methylation at Arg-85 and Arg-87 by PRMT1 promotes association of MAP3K5 with thioredoxin and negatively regulates MAP3K5 association with TRAF2, inhibiting MAP3K5 activation. Methylation is blocked by ubiquitination of PRMT1 by TRIM48. Expressed in various adult mouse tissues including heart, brain, lung, liver and kidney.

The protein resides in the cytoplasm. The protein localises to the endoplasmic reticulum. The enzyme catalyses L-seryl-[protein] + ATP = O-phospho-L-seryl-[protein] + ADP + H(+). It carries out the reaction L-threonyl-[protein] + ATP = O-phospho-L-threonyl-[protein] + ADP + H(+). Its activity is regulated as follows. Activated by various stressors, including oxidative stress, endoplasmic reticulum stress, and calcium overload, as well as by receptor-mediated inflammatory signals, such as the tumor necrosis factor (TNF) and lipopolysaccharide (LPS). Homophilic association of MAP3K5/ASK1 through the C-terminal coiled-coil domains and the heteromeric complex formation of MAP3K5/ASK1 with the reduced form of thioredoxin (TXN), constitutes an inactive form of the kinase. Upon ROS-induced dissociation of TXN from MAP3K5/ASK1, TRAF2 and TRAF6 are reciprocally recruited to MAP3K5/ASK1 and form the active MAP3K5/ASK1 signalosome, in which TRAF2 and TRAF6 appear to facilitate the active configuration of MAP3K5/ASK1. MAP3K5/ASK1 activity is also regulated through several phosphorylation and dephosphorylation events. Thr-845 is an activating phosphorylation site that is autophosphorylated and phosphorylated by MAP3K6/ASK2 and dephosphorylated by PPP5C. Ser-90 and Ser-1040 are inactivating phosphorylation sites, the former of which is phosphorylated by AKT1. Phosphorylation of Ser-973 induces association of MAP3K5/ASK1 with the 14-3-3 family proteins, which suppresses MAP3K5/ASK1 activity. Calcium/calmodulin-activated protein phosphatase calcineurin (PPP3CA) has been shown to directly dephosphorylate this site. SOCS1 binds to ASK1 by recognizing phosphorylation of Tyr-725 and induces MAP3K5/ASK1 degradation in endothelial cells. Also dephosphorylated and activated by PGAM5. Contains an N-terminal autoinhibitory domain. Its function is as follows. Serine/threonine kinase which acts as an essential component of the MAP kinase signal transduction pathway. Plays an important role in the cascades of cellular responses evoked by changes in the environment. Mediates signaling for determination of cell fate such as differentiation and survival. Plays a crucial role in the apoptosis signal transduction pathway through mitochondria-dependent caspase activation. MAP3K5/ASK1 is required for the innate immune response, which is essential for host defense against a wide range of pathogens. Mediates signal transduction of various stressors like oxidative stress as well as by receptor-mediated inflammatory signals, such as the tumor necrosis factor (TNF) or lipopolysaccharide (LPS). Once activated, acts as an upstream activator of the MKK/JNK signal transduction cascade and the p38 MAPK signal transduction cascade through the phosphorylation and activation of several MAP kinase kinases like MAP2K4/SEK1, MAP2K3/MKK3, MAP2K6/MKK6 and MAP2K7/MKK7. These MAP2Ks in turn activate p38 MAPKs and c-jun N-terminal kinases (JNKs). Both p38 MAPK and JNKs control the transcription factors activator protein-1 (AP-1). This is Mitogen-activated protein kinase kinase kinase 5 (Map3k5) from Mus musculus (Mouse).